Here is a 425-residue protein sequence, read N- to C-terminus: AFP homolog 2 (425 aa).

Disordered stretches follow at residues 1–207 (MDDD…SGTE) and 288–327 (PFAG…DNSN). The tract at residues 7-17 (LELSLGLSCGG) is necessary and sufficient for the interaction with TOPLESS. The segment covering 20–34 (GKAKGNNNNNAGSSS) has biased composition (low complexity). The span at 37-54 (YRAEGGDRSAKVIDDFKN) shows a compositional bias: basic and acidic residues. The span at 66 to 81 (PSSGSQRSDSGQQPPQ) shows a compositional bias: low complexity. Over residues 124–140 (NDDKKKEKDSSHVDMHE) the composition is skewed to basic and acidic residues. Polar residues-rich tracts occupy residues 146 to 158 (SHVS…GSTA), 185 to 197 (TDTN…TGQR), and 288 to 299 (PFAGRVPSNSAT). The interval 322-425 (TGDNSNLNTA…MGMTAASAHT (104 aa)) is necessary and sufficient for the interaction with the JAZ proteins.

Belongs to the Ninja family. As to quaternary structure, component of a complex at least composed of TOPLESS, TPR2, TPR3, TIFY4B/PPD2, MYC3/ATR2 and TIFY3B/JAZ12. Interacts (via C-terminus) with TIFY10A/JAZ1; TIFY10B/JAZ2; TIFY6B/JAZ3; TIFY6A/JAZ4; TIFY11A/JAZ5; TIFY11B/JAZ6; TIFY7/JAZ9; TIFY9/JAZ10; TIFY3A/JAZ11; TIFY3B/JAZ12; TIFY4A/PPD1; TIFY4B/PPD2 and TIFY8 (via TIFY domain). Interacts with TOPLESS. Interacts with PAT1H1.

The protein localises to the nucleus. Its function is as follows. Acts as a transcriptional repressor. Negative regulator of jasmonate responses. Connects the JAZ proteins and the non-JAZ protein TIFY8 with the TOPLESS corepressors. In Arabidopsis thaliana (Mouse-ear cress), this protein is AFP homolog 2.